Here is a 236-residue protein sequence, read N- to C-terminus: Hydroxyacylglutathione hydrolase (236 aa).

Zn(2+)-binding residues include H52, H54, D56, H57, H108, D125, and H163.

The protein belongs to the metallo-beta-lactamase superfamily. Glyoxalase II family. In terms of assembly, monomer. Zn(2+) is required as a cofactor.

It catalyses the reaction an S-(2-hydroxyacyl)glutathione + H2O = a 2-hydroxy carboxylate + glutathione + H(+). It functions in the pathway secondary metabolite metabolism; methylglyoxal degradation; (R)-lactate from methylglyoxal: step 2/2. Thiolesterase that catalyzes the hydrolysis of S-D-lactoyl-glutathione to form glutathione and D-lactic acid. The chain is Hydroxyacylglutathione hydrolase from Mannheimia succiniciproducens (strain KCTC 0769BP / MBEL55E).